A 691-amino-acid polypeptide reads, in one-letter code: Threonine--tRNA ligase (691 aa).

The disordered stretch occupies residues 1 to 22; it reads MSVPAQPAPGADGGDPRQPIRV. The region spanning 1–73 is the TGS domain; that stretch reads MSVPAQPAPG…DADAEVTPIA (73 aa). Positions 268–574 are catalytic; the sequence is DHRKLGVELD…LTEHYAGAFP (307 aa). The Zn(2+) site is built by Cys373, His424, and His551.

Belongs to the class-II aminoacyl-tRNA synthetase family. Homodimer. It depends on Zn(2+) as a cofactor.

It is found in the cytoplasm. The enzyme catalyses tRNA(Thr) + L-threonine + ATP = L-threonyl-tRNA(Thr) + AMP + diphosphate + H(+). Its function is as follows. Catalyzes the attachment of threonine to tRNA(Thr) in a two-step reaction: L-threonine is first activated by ATP to form Thr-AMP and then transferred to the acceptor end of tRNA(Thr). Also edits incorrectly charged L-seryl-tRNA(Thr). This Mycobacterium marinum (strain ATCC BAA-535 / M) protein is Threonine--tRNA ligase.